The primary structure comprises 72 residues: Candidate secreted effector protein MPL124499 (72 aa).

The first 21 residues, Met1–Gly21, serve as a signal peptide directing secretion.

Belongs to the CPGH1 family.

The protein resides in the secreted. It localises to the host cell. The protein localises to the host cytoplasm. Its subcellular location is the host nucleus. Rust effector delivered into infected tissues to modulate host functions and contribute to pathogen virulence. Enhances leaf colonization by the bacteria Pseudomonas syringae and the oomycete Hyaloperonospora arabidopsidis pathogens in an Arabidopsis thaliana infection model. This chain is Candidate secreted effector protein MPL124499, found in Melampsora larici-populina (strain 98AG31 / pathotype 3-4-7) (Poplar leaf rust fungus).